The following is a 245-amino-acid chain: MNPEEFRQALLDHGIALTDAQMAQFARYYQLLVQTNEHLNLTAITAETEVYLKHFYDSLTGAFAYPKLQSQALTLCDIGAGAGFPSLPLKIAFPQLEVTIVDSLNKRINFLADLCDDLGLTGVYLVHDRAETFAAKGSPYREQFDLVTARAVARLVVLGELCLPAAKVGGAFLAYKASAVNDELKLATGAINKLGGQVAGTTKLTLPTKPEAEERNLVVIDKVAKTPGKYPRRPGVPAKKPLINV.

S-adenosyl-L-methionine is bound by residues Gly79, Phe84, 130–131 (AE), and Arg150.

This sequence belongs to the methyltransferase superfamily. RNA methyltransferase RsmG family.

The protein localises to the cytoplasm. Functionally, specifically methylates the N7 position of a guanine in 16S rRNA. This chain is Ribosomal RNA small subunit methyltransferase G, found in Limosilactobacillus fermentum (strain NBRC 3956 / LMG 18251) (Lactobacillus fermentum).